Here is a 110-residue protein sequence, read N- to C-terminus: Acylphosphatase (110 aa).

In terms of domain architecture, Acylphosphatase-like spans 20–108 (RAHIFVRGKV…GEFNDFSILP (89 aa)). Residues Arg35 and Asn53 contribute to the active site.

The protein belongs to the acylphosphatase family.

The enzyme catalyses an acyl phosphate + H2O = a carboxylate + phosphate + H(+). The polypeptide is Acylphosphatase (acyP) (Pyrobaculum calidifontis (strain DSM 21063 / JCM 11548 / VA1)).